The sequence spans 321 residues: Lipoyl synthase (321 aa).

[4Fe-4S] cluster-binding residues include C68, C73, C79, C94, C98, C101, and S308. Residues 80-297 enclose the Radical SAM core domain; it reads FNHGTATFMI…KELAESIGFT (218 aa).

It belongs to the radical SAM superfamily. Lipoyl synthase family. [4Fe-4S] cluster is required as a cofactor.

It is found in the cytoplasm. It catalyses the reaction [[Fe-S] cluster scaffold protein carrying a second [4Fe-4S](2+) cluster] + N(6)-octanoyl-L-lysyl-[protein] + 2 oxidized [2Fe-2S]-[ferredoxin] + 2 S-adenosyl-L-methionine + 4 H(+) = [[Fe-S] cluster scaffold protein] + N(6)-[(R)-dihydrolipoyl]-L-lysyl-[protein] + 4 Fe(3+) + 2 hydrogen sulfide + 2 5'-deoxyadenosine + 2 L-methionine + 2 reduced [2Fe-2S]-[ferredoxin]. The protein operates within protein modification; protein lipoylation via endogenous pathway; protein N(6)-(lipoyl)lysine from octanoyl-[acyl-carrier-protein]: step 2/2. Catalyzes the radical-mediated insertion of two sulfur atoms into the C-6 and C-8 positions of the octanoyl moiety bound to the lipoyl domains of lipoate-dependent enzymes, thereby converting the octanoylated domains into lipoylated derivatives. The chain is Lipoyl synthase from Shewanella halifaxensis (strain HAW-EB4).